The following is a 491-amino-acid chain: Adenylosuccinate synthetase, chloroplastic (491 aa).

Residues 78-84 and 106-108 contribute to the GTP site; these read GDEGKGK and GHT. Asp79 functions as the Proton acceptor in the catalytic mechanism. 2 residues coordinate Mg(2+): Asp79 and Gly106. IMP contacts are provided by residues 79–82, 104–107, Thr196, Arg210, Gln290, Thr305, and Arg369; these read DEGK and NAGH. The active-site Proton donor is the His107. Residue 365 to 371 coordinates substrate; it reads TTTGRPR. GTP contacts are provided by residues Arg371, 397–399, and 480–482; these read KLD and GIG.

This sequence belongs to the adenylosuccinate synthetase family. Homodimer. Mg(2+) serves as cofactor.

It localises to the plastid. The protein localises to the chloroplast. It carries out the reaction IMP + L-aspartate + GTP = N(6)-(1,2-dicarboxyethyl)-AMP + GDP + phosphate + 2 H(+). Its pathway is purine metabolism; AMP biosynthesis via de novo pathway; AMP from IMP: step 1/2. In terms of biological role, plays an important role in the de novo pathway and in the salvage pathway of purine nucleotide biosynthesis. Catalyzes the first committed step in the biosynthesis of AMP from IMP. This chain is Adenylosuccinate synthetase, chloroplastic, found in Populus trichocarpa (Western balsam poplar).